A 353-amino-acid polypeptide reads, in one-letter code: Histidinol-phosphate aminotransferase (353 aa).

Lysine 214 is subject to N6-(pyridoxal phosphate)lysine.

The protein belongs to the class-II pyridoxal-phosphate-dependent aminotransferase family. Histidinol-phosphate aminotransferase subfamily. As to quaternary structure, homodimer. Pyridoxal 5'-phosphate serves as cofactor.

The enzyme catalyses L-histidinol phosphate + 2-oxoglutarate = 3-(imidazol-4-yl)-2-oxopropyl phosphate + L-glutamate. It functions in the pathway amino-acid biosynthesis; L-histidine biosynthesis; L-histidine from 5-phospho-alpha-D-ribose 1-diphosphate: step 7/9. The protein is Histidinol-phosphate aminotransferase of Gloeobacter violaceus (strain ATCC 29082 / PCC 7421).